Consider the following 406-residue polypeptide: Homocysteine-responsive endoplasmic reticulum-resident ubiquitin-like domain member 2 protein (406 aa).

One can recognise a Ubiquitin-like domain in the interval Val10–Arg89. A disordered region spans residues Cys86–Ser156. 2 stretches are compositionally biased toward low complexity: residues Thr87–Ser98 and Ser109–Glu139. Polar residues predominate over residues Thr145–Ser156. Residues Phe302–Phe322 form a helical membrane-spanning segment.

It localises to the membrane. Its function is as follows. Could be involved in the unfolded protein response (UPR) pathway. In Bos taurus (Bovine), this protein is Homocysteine-responsive endoplasmic reticulum-resident ubiquitin-like domain member 2 protein (HERPUD2).